The following is an 86-amino-acid chain: MALLITSKCTNCDMCLPECPNEAISIGDEIYVIDPILCTECVGHYDTPTCQKVCPITNCIKPDPEHQETEEQLWERFVMIHHSDKL.

4Fe-4S ferredoxin-type domains lie at 1-29 and 31-65; these read MALLITSKCTNCDMCLPECPNEAISIGDE and YVIDPILCTECVGHYDTPTCQKVCPITNCIKPDPE. Cysteine 9, cysteine 12, cysteine 15, cysteine 19, cysteine 38, cysteine 41, cysteine 50, and cysteine 54 together coordinate [4Fe-4S] cluster.

[4Fe-4S] cluster serves as cofactor.

This is an uncharacterized protein from Haemophilus influenzae (strain ATCC 51907 / DSM 11121 / KW20 / Rd).